The chain runs to 159 residues: Phosphopantetheine adenylyltransferase (159 aa).

T9 contacts substrate. ATP-binding positions include 9–10 and H17; that span reads TF. Residues K41, L73, and R87 each contribute to the substrate site. ATP contacts are provided by residues 88–90, E98, and 123–129; these read GLR and YAFLSST.

Belongs to the bacterial CoaD family. In terms of assembly, homohexamer. Mg(2+) is required as a cofactor.

Its subcellular location is the cytoplasm. It catalyses the reaction (R)-4'-phosphopantetheine + ATP + H(+) = 3'-dephospho-CoA + diphosphate. The protein operates within cofactor biosynthesis; coenzyme A biosynthesis; CoA from (R)-pantothenate: step 4/5. In terms of biological role, reversibly transfers an adenylyl group from ATP to 4'-phosphopantetheine, yielding dephospho-CoA (dPCoA) and pyrophosphate. In Vibrio campbellii (strain ATCC BAA-1116), this protein is Phosphopantetheine adenylyltransferase.